A 502-amino-acid polypeptide reads, in one-letter code: MQFFSLVSIFLFLSFLFLLRKWKNSNSQSKKLPPGPWKLPLLGSMLHMVGGLPHHVLRDLAKKYGPLMHLQLGEVSAVVVTSPDMAKEVLKTHDIAFASRPKLLAPEIVCYNRSDIAFCPYGDYWRQMRKICVLEVLSAKNVRSFSSIRRDEVLRLVNFVRSSTSEPVNFTERLFLFTSSMTCRSAFGKVFKEQETFIQLIKEVIGLAGGFDVADIFPSLKFLHVLTGMEGKIMKAHHKVDAIVEDVINEHKKNLAMGKTNGALGGEDLIDVLLRLMNDGGLQFPITNDNIKAIIFDMFAAGTETSSSTLVWAMVQMMRNPTILAKAQAEVREAFKGKETFDENDVEELKYLKLVIKETLRLHPPVPLLVPRECREETEINGYTIPVKTKVMVNVWALGRDPKYWDDADNFKPERFEQCSVDFIGNNFEYLPFGGGRRICPGISFGLANVYLPLAQLLYHFDWKLPTGMEPKDLDLTELVGVTAARKSDLMLVATPYQPSRE.

A helical transmembrane segment spans residues 2-22 (QFFSLVSIFLFLSFLFLLRKW). Cys440 provides a ligand contact to heme.

The protein belongs to the cytochrome P450 family. Requires heme as cofactor.

The protein localises to the membrane. It catalyses the reaction (-)-vetispiradiene + 2 reduced [NADPH--hemoprotein reductase] + 2 O2 = solavetivone + 2 oxidized [NADPH--hemoprotein reductase] + 3 H2O + 2 H(+). Involved in the biosynthesis of solavetivone, a potent antifungal phytoalexin. Catalyzes the successive and independent hydroxylations of premnaspirodiene and solavetivol. The first hydroxylation step is 3-fold more efficient than the second hydroxylation reaction. This Hyoscyamus muticus (Egyptian henbane) protein is Premnaspirodiene oxygenase (CYP71D55).